A 266-amino-acid polypeptide reads, in one-letter code: Glucose 1-dehydrogenase (266 aa).

15 to 39 lines the NADP(+) pocket; it reads LVTGASQGIGEATALRFAEEGAQVA. Serine 149 contributes to the substrate binding site. Tyrosine 162 functions as the Proton acceptor in the catalytic mechanism.

This sequence belongs to the short-chain dehydrogenases/reductases (SDR) family. In terms of assembly, homotetramer or homooctamer.

The catalysed reaction is D-glucose + NADP(+) = D-glucono-1,5-lactone + NADPH + H(+). Oxidizes both D-glucose and D-mannose, but is 15 times more catalytically efficient with mannose. Strictly dependent on NADP. The protein is Glucose 1-dehydrogenase of Gluconobacter oxydans (strain 621H) (Gluconobacter suboxydans).